The primary structure comprises 241 residues: Probable transcriptional regulatory protein lin1570 (241 aa).

Over residues 1-14 (MAGHSKWNNIQGRK) the composition is skewed to polar residues. Residues 1-22 (MAGHSKWNNIQGRKNAQDSKRS) are disordered.

Belongs to the TACO1 family.

It localises to the cytoplasm. The sequence is that of Probable transcriptional regulatory protein lin1570 from Listeria innocua serovar 6a (strain ATCC BAA-680 / CLIP 11262).